The following is a 2547-amino-acid chain: Piezo-type mechanosensitive ion channel component 1 (2547 aa).

Residues 1 to 12 lie on the Cytoplasmic side of the membrane; sequence MEPHVLGAGLYW. A helical membrane pass occupies residues 13 to 25; that stretch reads LLLPCTLLAASLL. The Extracellular portion of the chain corresponds to 26 to 28; the sequence is RFN. Residues 29-44 form a helical membrane-spanning segment; that stretch reads ALSLVYLLFLLLLPWL. Over 45-58 the chain is Cytoplasmic; it reads PGPSRHSIPGHTGR. A helical transmembrane segment spans residues 59–81; sequence LLRALLCLSLLFLVAHLAFQICL. The Extracellular segment spans residues 82 to 121; the sequence is HTVPHLDQFLGQNGSLWVKVSQHIGVTRLDLKDIFNTTRL. N-linked (GlcNAc...) asparagine glycosylation is present at asparagine 94. The chain crosses the membrane as a helical span at residues 122-138; sequence VAPDLGVLLASSLCLGL. Over 139–201 the chain is Cytoplasmic; the sequence is CGRLTRKAGQ…ASRFRVTAHW (63 aa). A helical membrane pass occupies residues 202–221; the sequence is LLMTSGRTLVIVLLALAGIA. At 222–223 the chain is on the extracellular side; sequence HP. The chain crosses the membrane as a helical span at residues 224–243; that stretch reads SAFSSIYLVVFLAICTWWSC. The Cytoplasmic segment spans residues 244–254; it reads HFPLSPLGFNT. A helical membrane pass occupies residues 255-275; it reads LCVMVSCFGAGHLICLYCYQT. Over 276 to 316 the chain is Extracellular; that stretch reads PFIQDMLPPGNIWARLFGLKNFVDLPNYSSPNALVLNTKHA. A helical transmembrane segment spans residues 317-337; that stretch reads WPIYVSPGILLLLYYTATSLL. The Cytoplasmic portion of the chain corresponds to 338-424; sequence KLHKSCPSEL…EMSPLHGLGH (87 aa). A disordered region spans residues 347 to 387; that stretch reads LRKETPREDEEHELELDHLEPEPQARDATQGEMPMTTEPDL. Residues 361 to 371 show a composition bias toward basic and acidic residues; that stretch reads ELDHLEPEPQA. A helical membrane pass occupies residues 425 to 445; it reads LIMDQSYVCALIAMMVWSIMY. At 446 to 447 the chain is on the extracellular side; it reads HS. Residues 448–463 form a helical membrane-spanning segment; sequence WLTFVLLLWACLIWTV. At 464–468 the chain is on the cytoplasmic side; it reads RSRHQ. The chain crosses the membrane as a helical span at residues 469–491; sequence LAMLCSPCILLYGLTLCCLRYVW. Topologically, residues 492–518 are extracellular; the sequence is AMELPELPTTLGPVSLHQLGLEHTRYP. The helical transmembrane segment at 519 to 536 threads the bilayer; that stretch reads CLDLGAMLLYLLTFWLLL. Residues 537–580 lie on the Cytoplasmic side of the membrane; sequence RQFVKEKLLKKQKVPAALLEVTVADTEPTQTQTLLRSLGELVTG. A helical membrane pass occupies residues 581-601; sequence IYVKYWIYVCAGMFIVVSFAG. Residue arginine 602 is a topological domain, extracellular. Residues 603 to 623 traverse the membrane as a helical segment; that stretch reads LVVYKIVYMFLFLLCLTLFQV. The Cytoplasmic portion of the chain corresponds to 624–633; that stretch reads YYTLWRKLLR. The chain crosses the membrane as a helical span at residues 634-655; that stretch reads VFWWLVVAYTMLVLIAVYTFQF. The Extracellular portion of the chain corresponds to 656–685; sequence QDFPTYWRNLTGFTDEQLGDLGLEQFSVSE. Residues 686–702 traverse the membrane as a helical segment; sequence LFSSILIPGFFLLACIL. Residues 703–811 are Cytoplasmic-facing; it reads QLHYFHRPFM…RRLLELHVFK (109 aa). Residue serine 758 is modified to Phosphoserine. Residues 812-823 traverse the membrane as a helical segment; that stretch reads LVALYTVWVALK. The Extracellular portion of the chain corresponds to 824 to 826; that stretch reads EVS. Residues 827-840 traverse the membrane as a helical segment; sequence VMNLLLVVLWAFAL. Residues 841–854 are Cytoplasmic-facing; it reads PYPRFRPMASCLST. Residues 855–869 form a helical membrane-spanning segment; that stretch reads VWTCIIIVCKMLYQL. At 870–921 the chain is on the extracellular side; sequence KIVNPHEYSSNCTEPFPNNTNLQPLEINQSLLYRGPVDPANWFGVRKGYPNL. A helical membrane pass occupies residues 922–949; that stretch reads GYIQNHLQILLLLVFEAVVYRRQEHYRR. The Cytoplasmic portion of the chain corresponds to 950-989; sequence QHQQAPLPAQAVCADGTRQRLDQDLLSCLKYFINFFFYKF. The helical transmembrane segment at 990–1005 threads the bilayer; it reads GLEICFLMAVNVIGQR. At 1006-1007 the chain is on the extracellular side; it reads MN. The helical transmembrane segment at 1008 to 1023 threads the bilayer; that stretch reads FMVILHGCWLVAILTR. Over 1024–1036 the chain is Cytoplasmic; the sequence is RRREAIARLWPNY. Residues 1037–1052 traverse the membrane as a helical segment; that stretch reads CLFLTLFLLYQYLLCL. The Extracellular portion of the chain corresponds to 1053–1091; it reads GMPPALCIDYPWRWSKAIPMNSALIKWLYLPDFFRAPNS. The chain crosses the membrane as a helical span at residues 1092–1113; sequence TNLISDFLLLLCASQQWQVFSA. At 1114–1148 the chain is on the cytoplasmic side; that stretch reads ERTEEWQRMAGINTDHLEPLRGEPNPIPNFIHCRS. The chain crosses the membrane as a helical span at residues 1149-1175; sequence YLDMLKVAVFRYLFWLVLVVVFVAGAT. At 1176–1180 the chain is on the extracellular side; sequence RISIF. The helical transmembrane segment at 1181-1199 threads the bilayer; sequence GLGYLLACFYLLLFGTTLL. Topologically, residues 1200–1212 are cytoplasmic; sequence QKDTRAQLVLWDC. A helical membrane pass occupies residues 1213–1231; the sequence is LILYNVTVIISKNMLSLLS. The Extracellular portion of the chain corresponds to 1232-1280; that stretch reads CVFVEQMQSNFCWVIQLFSLVCTVKGYYDPKEMMTRDRDCLLPVEEAGI. The helical transmembrane segment at 1281–1297 threads the bilayer; sequence IWDSICFFFLLLQRRIF. Residues 1298-1656 lie on the Cytoplasmic side of the membrane; sequence LSHYFLHVSA…ELLLDRRLHI (359 aa). A coiled-coil region spans residues 1334-1365; the sequence is HRQIEEKSLAQLKRQMKRIRAKQEKYRQSQAS. Disordered stretches follow at residues 1354 to 1396, 1456 to 1480, and 1567 to 1610; these read AKQE…RRQW, RRERARQERAEQLASGGDLNPDVEP, and TLSG…NTRS. Over residues 1361–1372 the composition is skewed to polar residues; that stretch reads QSQASRGQLQSK. Low complexity predominate over residues 1376–1392; the sequence is DPSQEPGPDSPGGSSPP. A phosphoserine mark is found at serine 1385 and serine 1390. Positions 1592-1610 are enriched in polar residues; it reads SSMTDDTSSPLSTGYNTRS. Phosphoserine occurs at positions 1627, 1631, and 1646. The chain crosses the membrane as a helical span at residues 1657-1700; sequence PELEEAERFEAQQGRTLRLLRAGYQCVAAHSELLCYFIIILNHM. The Extracellular portion of the chain corresponds to 1701 to 1704; it reads VTAS. The chain crosses the membrane as a helical span at residues 1705–1720; it reads AASLVLPVLVFLWAML. Residues 1721 to 1728 are Cytoplasmic-facing; the sequence is TIPRPSKR. A helical membrane pass occupies residues 1729–1747; the sequence is FWMTAIVFTEVMVVTKYLF. Topologically, residues 1748–1779 are extracellular; the sequence is QFGFFPWNSYVVLRRYENKPYFPPRILGLEKT. The helical transmembrane segment at 1780–1801 threads the bilayer; it reads DSYIKYDLVQLMALFFHRSQLL. The Cytoplasmic portion of the chain corresponds to 1802–1976; the sequence is CYGLWDHEED…HTKYRAATDV (175 aa). Composition is skewed to basic and acidic residues over residues 1816 to 1837 and 1855 to 1880; these read DHCRSSVKDREAKEEPEAKLES and PRDHIQGKGSIRSKDVIQDPPEDLKP. The interval 1816–1931 is disordered; that stretch reads DHCRSSVKDR…RPRHTQEKSK (116 aa). Positions 1881–1894 are enriched in basic residues; it reads RHTRHISIRFRRRK. The segment covering 1912-1931 has biased composition (basic and acidic residues); the sequence is GEGKETTERKRPRHTQEKSK. The helical transmembrane segment at 1977-1996 threads the bilayer; it reads YALMFLADIVDIIIIIFGFW. Over 1997 to 2016 the chain is Extracellular; it reads AFGKHSAATDIASSLSDDQV. The helical transmembrane segment at 2017 to 2033 threads the bilayer; it reads PQAFLFMLLVQFGTMVI. Over 2034 to 2047 the chain is Cytoplasmic; the sequence is DRALYLRKTVLGKL. Residues 2048-2068 form a helical membrane-spanning segment; it reads AFQVVLVVAIHIWMFFILPAV. The Extracellular portion of the chain corresponds to 2069–2076; it reads TERMFSQN. Residues 2077-2092 form a helical membrane-spanning segment; sequence AVAQLWYFVKCIYFAL. Residues 2093 to 2192 lie on the Cytoplasmic side of the membrane; sequence SAYQIRCGYP…KKKIVKYGMG (100 aa). A helical transmembrane segment spans residues 2193–2213; the sequence is GLIILFLIAIIWFPLLFMSLI. Over 2214 to 2457 the chain is Extracellular; the sequence is RSVVGVVNQP…IFSDKVSPPS (244 aa). An intrachain disulfide couples cysteine 2437 to cysteine 2441. Residues 2458-2478 traverse the membrane as a helical segment; it reads LGFLAGYGIVGLYVSIVLVVG. At 2479–2547 the chain is on the cytoplasmic side; sequence KFVRGFFSEI…TMIKWTRERE (69 aa).

It belongs to the PIEZO (TC 1.A.75) family. Homotrimer; the homotrimer forms a propeller-shaped Piezo channel with a cation-ion conducting pore. Heterotrimeric interaction may occur between PIEZO1 and PIEZO2. Interacts with PKD2. Interacts with STOMl3. Interacts with TMC1, TMC2, PCDG15 and CIB2; the interaction may be part of the MET complex. Interacts with MDFIC (via C-terminus); the interaction prolongs Piezo channel inactivation. Interacts with MDFI (via C-terminus); the interaction prolongs Piezo channel inactivation. As to expression, expressed in bladder, colon, kidney and skin. Also expressed in bone marrow, liver, lung, spleen and erythrocytes (at protein level). Expressed in myoblasts (at protein level). Expressed in red blood cells. Expressed in cochlear inner and outer hair cells (IHCs and OHCs) and vestibular organ HCs.

The protein resides in the endoplasmic reticulum membrane. Its subcellular location is the endoplasmic reticulum-Golgi intermediate compartment membrane. It localises to the cell membrane. The protein localises to the cell projection. It is found in the lamellipodium membrane. The catalysed reaction is K(+)(in) = K(+)(out). It catalyses the reaction Na(+)(in) = Na(+)(out). The enzyme catalyses Ca(2+)(in) = Ca(2+)(out). It carries out the reaction Mg(2+)(in) = Mg(2+)(out). Its activity is regulated as follows. Regulated by auxillary subunits MDFIC and MDFI. Down-regulated by phosphatidylserines exposed on the cell surface. Divalent ions decrease the single-channel permeability of K(+). Pore-forming subunit of the mechanosensitive non-specific cation Piezo channel required for rapidly adapting mechanically activated (MA) currents and has a key role in sensing touch and tactile pain. Piezo channels are homotrimeric three-blade propeller-shaped structures that utilize a cap-motion and plug-and-latch mechanism to gate their ion-conducting pathways. Generates currents characterized by a linear current-voltage relationship that are sensitive to ruthenium red and gadolinium. Conductance to monovalent alkali ions is highest for K(+), intermediate for Na(+) and lowest for Li(+). Divalent ions except for Mn(2+) permeate the channel but more slowly than the monovalent ions and they also reduce K(+) currents. Plays a key role in epithelial cell adhesion by maintaining integrin activation through R-Ras recruitment to the ER, most probably in its activated state, and subsequent stimulation of calpain signaling. In inner ear hair cells, PIEZO1/2 subunits may constitute part of the mechanotransducer (MET) non-selective cation channel complex where they may act as pore-forming ion-conducting component in the complex. In the kidney, may contribute to the detection of intraluminal pressure changes and to urine flow sensing. Acts as a shear-stress sensor that promotes endothelial cell organization and alignment in the direction of blood flow through calpain activation. Plays a key role in blood vessel formation and vascular structure in both development and adult physiology. Acts as a sensor of phosphatidylserine (PS) flipping at the plasma membrane and governs morphogenesis of muscle cells. In myoblasts, flippase-mediated PS enrichment at the inner leaflet of plasma membrane triggers channel activation and Ca(2+) influx followed by Rho GTPases signal transduction, leading to assembly of cortical actomyosin fibers and myotube formation. The polypeptide is Piezo-type mechanosensitive ion channel component 1 (Mus musculus (Mouse)).